A 176-amino-acid chain; its full sequence is Sigma intracellular receptor 2 (176 aa).

Residues Met-1–Gly-9 are Cytoplasmic-facing. Residues Leu-10–Leu-30 form a helical membrane-spanning segment. An EXPERA domain is found at Leu-10 to Leu-158. Residues Gln-31 to Ser-68 lie on the Lumenal side of the membrane. A helical transmembrane segment spans residues Phe-69–Phe-89. The cholesterol site is built by Val-75 and Gln-77. Residues Lys-90–Pro-99 are Cytoplasmic-facing. A helical membrane pass occupies residues Ala-100–Leu-120. Residues Asp-121–Leu-141 are Lumenal-facing. A helical membrane pass occupies residues Phe-142–Val-162. Topologically, residues Arg-163–Lys-176 are cytoplasmic. The short motif at Lys-172–Lys-176 is the ER retention motif element.

The protein belongs to the TMEM97/sigma-2 receptor family. As to quaternary structure, homodimer. Interacts with NPC1; the interaction impairs NPC1-mediated cholesterol transport. Interacts with PGRMC1 and LDLR; the interaction increases LDL internalization. Interacts with histatin 1/HTN1; the interaction induces HTN1-stimulating wound healing. Interacts with TSPO.

The protein localises to the rough endoplasmic reticulum membrane. It is found in the nucleus membrane. In terms of biological role, sigma-2 receptor which contributes to ameliorate dysfunctional cellular processes and slow degenerative progression by regulating cell functions including cholesterol biosynthesis/trafficking, membrane trafficking, autophagy, lipid membrane-bound protein trafficking, and receptor stabilization at the cell surface. Forms a ternary complex with PGRMC1 receptor and low density lipoprotein receptor/LDLR at the plasma membrane, which increases LDLR-mediated LDL cholesterol internalization. Decreases lysosomal sterol transporter NPC1 availability to the cell, probably through NPC1-binding, hence controlling lipid transport, including cholesterol and LBPA, outside of late endosome/lysosome. Binds regio- and stereoselective ligand 20(S)-hydroxycholesterol (20(S)-OHC) which enhances TMEM97-NPC1 interaction and decreases TMEM97-PGRMC1 and TMEM97-TSPO interactions, thereby linking OHC binding to cholesterol homeostasis. Also able to bind cholesterol. Binds histatin 1 (Hst 1)/HN1 salivary peptide at the ER membrane, which is critical for increasing mitochondria-ER contacts and stimulating Hst1 wound healing properties. May alter the activity of some cytochrome P450 proteins. Although shows homologies with sterol isomerases (EXPERA domain), not able to catalyze sterol isomerization. However, may act as sensors of these molecules. Acts as a quality control factor in the ER, promoting the proteolytic degradation of nonproductive and extramitochondrial precursor proteins in the ER membrane thus removing them from the ER surface. In Bos taurus (Bovine), this protein is Sigma intracellular receptor 2 (TMEM97).